Reading from the N-terminus, the 878-residue chain is Aminopeptidase M1-A (878 aa).

The tract at residues Val-105–Val-212 is required for membrane association. Substrate-binding positions include Glu-145 and Gly-278 to Asn-282. Residue His-314 coordinates Zn(2+). The Proton acceptor role is filled by Glu-315. Zn(2+) contacts are provided by His-318 and Glu-337. The short motif at Leu-727–Leu-728 is the Dileucine internalization motif element.

The protein belongs to the peptidase M1 family. Homodimer. Zn(2+) is required as a cofactor.

It localises to the membrane. It is found in the microsome membrane. The protein resides in the cytoplasm. It carries out the reaction Release of an N-terminal amino acid, Xaa-|-Yaa- from a peptide, amide or arylamide. Xaa is preferably Ala, but may be most amino acids including Pro (slow action). When a terminal hydrophobic residue is followed by a prolyl residue, the two may be released as an intact Xaa-Pro dipeptide.. The polypeptide is Aminopeptidase M1-A (Oryza sativa subsp. japonica (Rice)).